Here is a 488-residue protein sequence, read N- to C-terminus: Argininosuccinate lyase 2 (488 aa).

The protein belongs to the lyase 1 family. Argininosuccinate lyase subfamily.

The protein localises to the cytoplasm. It catalyses the reaction 2-(N(omega)-L-arginino)succinate = fumarate + L-arginine. The protein operates within amino-acid biosynthesis; L-arginine biosynthesis; L-arginine from L-ornithine and carbamoyl phosphate: step 3/3. The polypeptide is Argininosuccinate lyase 2 (Rhizobium meliloti (strain 1021) (Ensifer meliloti)).